Reading from the N-terminus, the 1403-residue chain is DNA-directed RNA polymerase subunit beta' (1403 aa).

Zn(2+) is bound by residues C71, C73, C86, and C89. Mg(2+)-binding residues include D462, D464, and D466. Positions 811, 885, 892, and 895 each coordinate Zn(2+).

The protein belongs to the RNA polymerase beta' chain family. In terms of assembly, the RNAP catalytic core consists of 2 alpha, 1 beta, 1 beta' and 1 omega subunit. When a sigma factor is associated with the core the holoenzyme is formed, which can initiate transcription. Mg(2+) serves as cofactor. Requires Zn(2+) as cofactor.

It catalyses the reaction RNA(n) + a ribonucleoside 5'-triphosphate = RNA(n+1) + diphosphate. Functionally, DNA-dependent RNA polymerase catalyzes the transcription of DNA into RNA using the four ribonucleoside triphosphates as substrates. This is DNA-directed RNA polymerase subunit beta' from Bartonella bacilliformis (strain ATCC 35685 / KC583 / Herrer 020/F12,63).